Reading from the N-terminus, the 217-residue chain is Glutathione S-transferase U20 (217 aa).

Residues 3-82 (NLPILLDYWP…YVDEAWPEKN (80 aa)) form the GST N-terminal domain. 3 residues coordinate glutathione: serine 13, isoleucine 54, and serine 67. The 121-residue stretch at 88–208 (DPYGRAQARF…LPDSEKIVAY (121 aa)) folds into the GST C-terminal domain.

It belongs to the GST superfamily. Tau family. As to quaternary structure, homodimerization. Interacts with JAR1/FIN219 under continuous far red (cFR) light to stimulate JAR1/FIN219 activity and substrate selectivity. In terms of tissue distribution, mostly associated with vascular tissues, especially near hydathodes.

The protein resides in the nucleus. It is found in the cytoplasm. It localises to the cytosol. The enzyme catalyses RX + glutathione = an S-substituted glutathione + a halide anion + H(+). Activated by JAR1/FIN219. Its function is as follows. Exhibits glutathione-dependent thiol transferase activities. Can use glutathione (GSH) and 1-chloro-2,4-dinitrobenzene (CDNB) as substrates. Involved in the regulation of far-red light influence on development. Regulator of the interplay between light and JA signaling by increasing JAR1/FIN219 efficiency. Maybe involved in gravitropic signal transduction. This Arabidopsis thaliana (Mouse-ear cress) protein is Glutathione S-transferase U20.